The primary structure comprises 269 residues: Shikimate dehydrogenase (NADP(+)) (269 aa).

Shikimate-binding positions include 14–16 and Thr60; that span reads TLS. Lys64 acts as the Proton acceptor in catalysis. NADP(+) is bound at residue Asp76. Shikimate-binding residues include Asn85 and Asp100. Residues 122-126 and Met208 each bind NADP(+); that span reads GAGGA. Position 210 (Tyr210) interacts with shikimate. Gly232 is a binding site for NADP(+).

The protein belongs to the shikimate dehydrogenase family. As to quaternary structure, homodimer.

The enzyme catalyses shikimate + NADP(+) = 3-dehydroshikimate + NADPH + H(+). Its pathway is metabolic intermediate biosynthesis; chorismate biosynthesis; chorismate from D-erythrose 4-phosphate and phosphoenolpyruvate: step 4/7. In terms of biological role, involved in the biosynthesis of the chorismate, which leads to the biosynthesis of aromatic amino acids. Catalyzes the reversible NADPH linked reduction of 3-dehydroshikimate (DHSA) to yield shikimate (SA). The chain is Shikimate dehydrogenase (NADP(+)) from Caldivirga maquilingensis (strain ATCC 700844 / DSM 13496 / JCM 10307 / IC-167).